A 128-amino-acid chain; its full sequence is S-protein homolog 5 (128 aa).

A signal peptide spans 1-20 (MEKVSIVCFFFFLLFGSGYG).

This sequence belongs to the plant self-incompatibility (S1) protein family.

The protein resides in the secreted. In Arabidopsis thaliana (Mouse-ear cress), this protein is S-protein homolog 5.